The following is a 75-amino-acid chain: Small ribosomal subunit protein eS31 (75 aa).

Cys-41, Cys-44, Cys-60, and Cys-63 together coordinate Zn(2+). The C4-type zinc-finger motif lies at 41-63; sequence CPRCGSIMAHHLKPNERWSCGKC.

It belongs to the eukaryotic ribosomal protein eS31 family. As to quaternary structure, part of the 30S ribosomal subunit. Requires Zn(2+) as cofactor.

The sequence is that of Small ribosomal subunit protein eS31 from Saccharolobus solfataricus (strain ATCC 35092 / DSM 1617 / JCM 11322 / P2) (Sulfolobus solfataricus).